A 140-amino-acid polypeptide reads, in one-letter code: Nucleoside diphosphate kinase (140 aa).

Lys-11, Phe-59, Arg-87, Thr-93, Arg-104, and Asn-114 together coordinate ATP. The Pros-phosphohistidine intermediate role is filled by His-117.

This sequence belongs to the NDK family. As to quaternary structure, homotetramer. Requires Mg(2+) as cofactor.

The protein localises to the cytoplasm. It carries out the reaction a 2'-deoxyribonucleoside 5'-diphosphate + ATP = a 2'-deoxyribonucleoside 5'-triphosphate + ADP. The enzyme catalyses a ribonucleoside 5'-diphosphate + ATP = a ribonucleoside 5'-triphosphate + ADP. In terms of biological role, major role in the synthesis of nucleoside triphosphates other than ATP. The ATP gamma phosphate is transferred to the NDP beta phosphate via a ping-pong mechanism, using a phosphorylated active-site intermediate. This is Nucleoside diphosphate kinase from Methylobacterium nodulans (strain LMG 21967 / CNCM I-2342 / ORS 2060).